Consider the following 251-residue polypeptide: uncharacterized protein (251 aa).

The RING-type zinc finger occupies 192-238; the sequence is CMMCVQRGDERVAITTPYTTDCGHTYCYACIMSRLKLVNNVSCPICK.

The protein resides in the cytoplasm. This is an uncharacterized protein from Schizosaccharomyces pombe (strain 972 / ATCC 24843) (Fission yeast).